Consider the following 193-residue polypeptide: Probable GTP-binding protein EngB (193 aa).

The EngB-type G domain occupies 22-193; it reads MYPEISFIGR…ELWQIIEDLL (172 aa). GTP is bound by residues 30-37, 57-61, 75-78, 142-145, and 174-176; these read GRSNVGKS, GKTRT, DLPG, TKMD, and FSS. Residues Ser37 and Thr59 each contribute to the Mg(2+) site.

The protein belongs to the TRAFAC class TrmE-Era-EngA-EngB-Septin-like GTPase superfamily. EngB GTPase family. It depends on Mg(2+) as a cofactor.

Its function is as follows. Necessary for normal cell division and for the maintenance of normal septation. This is Probable GTP-binding protein EngB from Natranaerobius thermophilus (strain ATCC BAA-1301 / DSM 18059 / JW/NM-WN-LF).